The primary structure comprises 164 residues: Arginine repressor (164 aa).

This sequence belongs to the ArgR family.

Its subcellular location is the cytoplasm. It participates in amino-acid biosynthesis; L-arginine biosynthesis [regulation]. In terms of biological role, regulates arginine biosynthesis genes. The sequence is that of Arginine repressor from Mycolicibacterium paratuberculosis (strain ATCC BAA-968 / K-10) (Mycobacterium paratuberculosis).